Reading from the N-terminus, the 461-residue chain is Armadillo repeat-containing X-linked protein 1 (461 aa).

Residues 1 to 6 (MGRTRE) lie on the Mitochondrial intermembrane side of the membrane. 2 mitochondrion outer membrane (MOM)-targeting sequence regions span residues 1–6 (MGRTRE) and 26–36 (RLTWGKDENEK). Residues 7–29 (AGCVAAGMVIGAGACYCVYRLTW) traverse the membrane as a helical; Signal-anchor segment. Residues 30–461 (GKDENEKLWD…VKVLKVLTKL (432 aa)) lie on the Cytoplasmic side of the membrane. 2 disordered regions span residues 34 to 110 (NEKL…HSEG) and 148 to 192 (SSLP…PATA). The span at 38-51 (WDDEDEEEEEEEES) shows a compositional bias: acidic residues. A compositionally biased stretch (basic and acidic residues) spans 96-110 (PDVKKEVYPESHSEG). Basic residues predominate over residues 167–185 (SRARNRTSGKVKRKNRSKS). 4 ARM repeats span residues 203 to 243 (PYKI…NNAA), 245 to 284 (SFNQNAIRELGGVPIIAKLIKTRDPIIREKTYNALNNLSV), 366 to 406 (PAMT…NIND), and 423 to 461 (SSLFFLFKESGVCVKKIKALASHKDLVVKVKVLKVLTKL).

This sequence belongs to the eutherian X-chromosome-specific Armcx family. In terms of assembly, interacts with MIRO1.

It localises to the mitochondrion. Its subcellular location is the mitochondrion outer membrane. Regulates mitochondrial transport during axon regeneration. Increases the proportion of motile mitochondria by recruiting stationary mitochondria into the motile pool. Enhances mitochondria movement and neurite growth in both adult axons and embryonic neurons. Promotes neuronal survival and axon regeneration after nerve injury. May link mitochondria to the Trak1-kinesin motor complex via its interaction with MIRO1. This Rattus norvegicus (Rat) protein is Armadillo repeat-containing X-linked protein 1 (Armcx1).